The chain runs to 185 residues: Intraflagellar transport protein 22 homolog (185 aa).

Residues 10–17, 63–67, and 123–126 each bind GTP; these read GPCESGKT, DCGGD, and HKPG. At serine 137 the chain carries Phosphoserine.

The protein belongs to the small GTPase superfamily. Rab family. Component of the IFT complex B, at least composed of IFT20, IFT22, IFT25, IFT27, IFT46, IFT52, TRAF3IP1/IFT54, IFT57, IFT74, IFT80, IFT81, and IFT88. Interacts with IFT88. Interacts with CFAP61.

The protein resides in the cell projection. The protein localises to the cilium. In terms of biological role, small GTPase-like component of the intraflagellar transport (IFT) complex B. The sequence is that of Intraflagellar transport protein 22 homolog (IFT22) from Homo sapiens (Human).